We begin with the raw amino-acid sequence, 629 residues long: Aspartate--tRNA(Asp/Asn) ligase (629 aa).

The tract at residues 1–24 (MERSSRADLISEDSHPARTHTCGD) is disordered. Basic and acidic residues predominate over residues 12 to 24 (EDSHPARTHTCGD). Glutamate 194 is an L-aspartate binding site. The segment at 218–221 (QTYK) is aspartate. Residue arginine 240 coordinates L-aspartate. Residues 240 to 242 (RDE) and glutamine 249 each bind ATP. L-aspartate is bound at residue histidine 474. Position 508 (glutamate 508) interacts with ATP. Residue arginine 515 participates in L-aspartate binding. 560 to 563 (GLDR) lines the ATP pocket.

The protein belongs to the class-II aminoacyl-tRNA synthetase family. Type 1 subfamily. Homodimer.

It is found in the cytoplasm. It catalyses the reaction tRNA(Asx) + L-aspartate + ATP = L-aspartyl-tRNA(Asx) + AMP + diphosphate. In terms of biological role, aspartyl-tRNA synthetase with relaxed tRNA specificity since it is able to aspartylate not only its cognate tRNA(Asp) but also tRNA(Asn). Reaction proceeds in two steps: L-aspartate is first activated by ATP to form Asp-AMP and then transferred to the acceptor end of tRNA(Asp/Asn). The protein is Aspartate--tRNA(Asp/Asn) ligase of Salinibacter ruber (strain DSM 13855 / M31).